Reading from the N-terminus, the 273-residue chain is Homeobox protein Hox-C13b (273 aa).

A DNA-binding region (homeobox) is located at residues 201 to 260 (GRKKRVPYTKIQLKELEKEYAASKFITKDRRRRISATTSLSERQVTIWFQNRRVKEKKFV).

It belongs to the Abd-B homeobox family.

It localises to the nucleus. Functionally, sequence-specific transcription factor which is part of a developmental regulatory system that provides cells with specific positional identities on the anterior-posterior axis. Plays a role in early embryonic development. The polypeptide is Homeobox protein Hox-C13b (hoxc13b) (Danio rerio (Zebrafish)).